Here is a 401-residue protein sequence, read N- to C-terminus: Argininosuccinate synthase (401 aa).

ATP contacts are provided by residues 9–17 (AFSGGLDTS) and Ala35. The L-citrulline site is built by Tyr88 and Ser93. Gly117 lines the ATP pocket. L-aspartate-binding residues include Thr119, Asn123, and Asp124. Asn123 contacts L-citrulline. Residues Arg127 and Tyr273 each contribute to the L-citrulline site.

It belongs to the argininosuccinate synthase family. Type 1 subfamily. Homotetramer.

The protein localises to the cytoplasm. It catalyses the reaction L-citrulline + L-aspartate + ATP = 2-(N(omega)-L-arginino)succinate + AMP + diphosphate + H(+). It participates in amino-acid biosynthesis; L-arginine biosynthesis; L-arginine from L-ornithine and carbamoyl phosphate: step 2/3. This is Argininosuccinate synthase from Xylella fastidiosa (strain Temecula1 / ATCC 700964).